Reading from the N-terminus, the 150-residue chain is MARSHDTKGSGGLSQRQLRVGEQVRHTLAQVLQRGEIRDDLIERTVISVSEVRMSPDLKIATCFITPLGSADPQAVIKALASHAKFIRGRVAPSLAQMKYMPEFRFRPDTSFDNFSKIDALLRSPEVARDLSHDDDEDGGADEAPRNGDE.

A disordered region spans residues 126–150 (EVARDLSHDDDEDGGADEAPRNGDE).

This sequence belongs to the RbfA family. In terms of assembly, monomer. Binds 30S ribosomal subunits, but not 50S ribosomal subunits or 70S ribosomes.

The protein localises to the cytoplasm. In terms of biological role, one of several proteins that assist in the late maturation steps of the functional core of the 30S ribosomal subunit. Associates with free 30S ribosomal subunits (but not with 30S subunits that are part of 70S ribosomes or polysomes). Required for efficient processing of 16S rRNA. May interact with the 5'-terminal helix region of 16S rRNA. In Brucella suis (strain ATCC 23445 / NCTC 10510), this protein is Ribosome-binding factor A.